Reading from the N-terminus, the 320-residue chain is Epoxidase atD (320 aa).

N-linked (GlcNAc...) asparagine glycans are attached at residues N245 and N299.

Its pathway is secondary metabolite biosynthesis. In terms of biological role, epoxidase; part of the gene cluster that mediates the biosynthesis of terreic acid, a quinone epoxide inhibitor of Bruton's tyrosine kinase. The first step of the pathway is the synthesis of 6-methylsalicylic acid (6-MSA) by the 6-methylsalicylic acid synthase atX. In the biosynthesis of 6-MSA, atX utilizes one acetyl-CoA and three malonyl-CoAs as its substrates and catalyzes a series of programmed reactions including Claisen condensation, reduction, aldol cyclization, and the hydrolytic cleavage that yields 6-MSA. The 6-methylsalicylate 1-monooxygenase atA then catalyzes the decarboxylative hydroxylation of 6-MSA to 3-methylcatechol. The next step is the conversion of 3-methylcatechol to 3-methyl-1,2,4-benzenetriol by cytochrome P450 monooxygenase atE, which is enhanced by cytochrome P450 monooxygenase atG. Then, the epoxidase atD catalyzes the epoxidation and hydroxyl oxidation of 3-methyl-1,2,4-benzenetriol to terremutin. Lastly, GMC oxidoreductase atC oxidizes terremutin to terreic acid. The chain is Epoxidase atD from Aspergillus terreus (strain NIH 2624 / FGSC A1156).